The chain runs to 83 residues: Exodeoxyribonuclease 7 small subunit (83 aa).

It belongs to the XseB family. Heterooligomer composed of large and small subunits.

The protein localises to the cytoplasm. The enzyme catalyses Exonucleolytic cleavage in either 5'- to 3'- or 3'- to 5'-direction to yield nucleoside 5'-phosphates.. Its function is as follows. Bidirectionally degrades single-stranded DNA into large acid-insoluble oligonucleotides, which are then degraded further into small acid-soluble oligonucleotides. In Rhizobium leguminosarum bv. trifolii (strain WSM2304), this protein is Exodeoxyribonuclease 7 small subunit.